We begin with the raw amino-acid sequence, 108 residues long: Cell division topological specificity factor (108 aa).

Belongs to the MinE family.

Functionally, prevents the cell division inhibition by proteins MinC and MinD at internal division sites while permitting inhibition at polar sites. This ensures cell division at the proper site by restricting the formation of a division septum at the midpoint of the long axis of the cell. The protein is Cell division topological specificity factor of Prochlorococcus marinus (strain MIT 9215).